We begin with the raw amino-acid sequence, 862 residues long: Protein SEY1 (862 aa).

The Cytoplasmic segment spans residues 1-747 (MVSNGHFASA…KRSAIGGMTQ (747 aa)). Positions 49-306 (GFNYHLISVF…IPADGFAVYA (258 aa)) constitute a GB1/RHD3-type G domain. 59–66 (GSQSTGKS) contacts GTP. A coiled-coil region spans residues 481 to 507 (SNYTQELALYQKDLEKISAQLRKDEMR). Residues 748–768 (IPVYFYILLLALGWNEIVAVL) form a helical membrane-spanning segment. Residues 769 to 771 (RNP) lie on the Lumenal side of the membrane. The chain crosses the membrane as a helical span at residues 772–792 (LYFFMLFLCAVGAFVTYQLNL). Residues 793–862 (WGPMIKMAEA…DDDDEDEGSW (70 aa)) are Cytoplasmic-facing. The disordered stretch occupies residues 819–862 (LEPSEAGPHAARYKNSTEEYEMSNVKAPQRTNSGDDDDEDEGSW). The segment covering 852–862 (GDDDDEDEGSW) has biased composition (acidic residues).

It belongs to the TRAFAC class dynamin-like GTPase superfamily. GB1/RHD3 GTPase family. RHD3 subfamily.

It localises to the endoplasmic reticulum membrane. Its function is as follows. Cooperates with the reticulon proteins and tubule-shaping DP1 family proteins to generate and maintain the structure of the tubular endoplasmic reticulum network. Has GTPase activity, which is required for its function in ER organization. This Uncinocarpus reesii (strain UAMH 1704) protein is Protein SEY1.